The following is a 185-amino-acid chain: Ribosome-recycling factor (185 aa).

The protein belongs to the RRF family.

It localises to the cytoplasm. Its function is as follows. Responsible for the release of ribosomes from messenger RNA at the termination of protein biosynthesis. May increase the efficiency of translation by recycling ribosomes from one round of translation to another. The polypeptide is Ribosome-recycling factor (Streptococcus uberis (strain ATCC BAA-854 / 0140J)).